Reading from the N-terminus, the 361-residue chain is Mitogen-activated protein kinase 1 (361 aa).

One can recognise a Protein kinase domain in the interval 28-316; the sequence is YINLAYIGEG…VEAALAHPYL (289 aa). ATP-binding positions include 34 to 42 and K57; that span reads IGEGAYGMV. Catalysis depends on D152, which acts as the Proton acceptor. T188 is subject to Phosphothreonine. Residues 188 to 190 carry the TXY motif; that stretch reads TEY. Y190 carries the post-translational modification Phosphotyrosine.

The protein belongs to the protein kinase superfamily. CMGC Ser/Thr protein kinase family. MAP kinase subfamily. As to quaternary structure, interacts with CDK2AP2. The cofactor is Mg(2+). In terms of processing, dually phosphorylated on Thr-188 and Tyr-190, which activates the enzyme. As to expression, expressed in the central nervous system, kidney, liver, intestine and the hematopoietic system. Also found in heart, muscle, pancreas and lung.

The protein localises to the cytoplasm. The protein resides in the cytoskeleton. It is found in the microtubule organizing center. Its subcellular location is the centrosome. It localises to the spindle. The catalysed reaction is L-seryl-[protein] + ATP = O-phospho-L-seryl-[protein] + ADP + H(+). The enzyme catalyses L-threonyl-[protein] + ATP = O-phospho-L-threonyl-[protein] + ADP + H(+). Activated by tyrosine phosphorylation during the M phase of the meiotic cell cycle. Dephosphorylated and inactivated by DUSP1. Serine/threonine kinase which acts as an essential component of the MAP kinase signal transduction pathway. Plays an important role in the MAPK/ERK cascade. Depending on the cellular context, this cascade mediates diverse biological functions such as cell growth, adhesion, survival and differentiation through the regulation of transcription, translation, cytoskeletal rearrangements. The MAPK/ERK cascade also plays a role in initiation and regulation of meiosis, mitosis, and postmitotic functions in differentiated cells by phosphorylating a number of transcription factors. Many of the substrates are localized in the nucleus, and seem to participate in the regulation of transcription upon stimulation. However, other substrates are found in the cytosol as well as in other cellular organelles, and those are responsible for processes such as translation, mitosis and apoptosis. Moreover, the MAPK/ERK cascade is also involved in the regulation of the endosomal dynamics, including lysosome processing and endosome cycling through the perinuclear recycling compartment (PNRC); as well as in the fragmentation of the Golgi apparatus during mitosis. Phosphorylates microtubule-associated protein 2 (MAP2), myelin basic protein (MBP) and Elk-1. Phosphorylates dual specificity protein phosphatase 1 (DUSP1) during meiosis, increasing its stability. Activated by M phase promoting factor (MPF). Plays a role in the spindle assembly checkpoint. The sequence is that of Mitogen-activated protein kinase 1 (mapk1) from Xenopus laevis (African clawed frog).